Consider the following 320-residue polypeptide: Malate dehydrogenase (320 aa).

NAD(+) contacts are provided by residues 10 to 15 (GAGQIG) and Asp34. Arg83 and Arg89 together coordinate substrate. NAD(+) is bound by residues Asn96 and 119–121 (ITN). Asn121 and Arg152 together coordinate substrate. His176 (proton acceptor) is an active-site residue.

This sequence belongs to the LDH/MDH superfamily. MDH type 3 family.

The enzyme catalyses (S)-malate + NAD(+) = oxaloacetate + NADH + H(+). Functionally, catalyzes the reversible oxidation of malate to oxaloacetate. The chain is Malate dehydrogenase from Methylorubrum extorquens (strain CM4 / NCIMB 13688) (Methylobacterium extorquens).